Here is a 509-residue protein sequence, read N- to C-terminus: Activin receptor type-1 (509 aa).

Positions 1 to 20 are cleaved as a signal peptide; that stretch reads MVDGVMILPVLVMIAFPFPS. Over 21–123 the chain is Extracellular; it reads MEDEKPKVNP…FPGTQNFHLE (103 aa). Asparagine 102 carries an N-linked (GlcNAc...) asparagine glycan. Residues 124-146 form a helical membrane-spanning segment; the sequence is VGLIILSVVFAVCLLACLLGVAL. Residues 147 to 509 lie on the Cytoplasmic side of the membrane; sequence RKFKRRNQER…NSLDKLKTDC (363 aa). In terms of domain architecture, GS spans 178-207; the sequence is STLADLLDHSCTSGSGSGLPFLVQRTVARQ. Residues 208 to 502 form the Protein kinase domain; sequence ITLLECVGKG…KTLTKIDNSL (295 aa). ATP is bound by residues 214 to 222 and lysine 235; that span reads VGKGRYGEV. Aspartate 336 acts as the Proton acceptor in catalysis. At serine 501 the chain carries Phosphoserine.

Belongs to the protein kinase superfamily. TKL Ser/Thr protein kinase family. TGFB receptor subfamily. As to quaternary structure, interacts with FKBP1A. Interacts with FCHO1. Interacts with CLU. Interacts with type II receptors AMHR2 and ACVR2A. Interacts with BMP7. Interacts with BMP9. Interacts with BMP6 (when glycosylated); the interaction may induce HAMP expression. Interacts with TSC22D1/TSC-22. The cofactor is Mg(2+). Mn(2+) is required as a cofactor.

The protein resides in the membrane. The enzyme catalyses L-threonyl-[receptor-protein] + ATP = O-phospho-L-threonyl-[receptor-protein] + ADP + H(+). It carries out the reaction L-seryl-[receptor-protein] + ATP = O-phospho-L-seryl-[receptor-protein] + ADP + H(+). In terms of biological role, bone morphogenetic protein (BMP) type I receptor that is involved in a wide variety of biological processes, including bone, heart, cartilage, nervous, and reproductive system development and regulation. As a type I receptor, forms heterotetrameric receptor complexes with the type II receptors AMHR2, ACVR2A ors ACVR2B. Upon binding of ligands such as BMP7 or BMP9 to the heteromeric complexes, type II receptors transphosphorylate ACVR1 intracellular domain. In turn, ACVR1 kinase domain is activated and subsequently phosphorylates SMAD1/5/8 proteins that transduce the signal. In addition to its role in mediating BMP pathway-specific signaling, suppresses TGFbeta/activin pathway signaling by interfering with the binding of activin to its type II receptor. Besides canonical SMAD signaling, can activate non-canonical signaling pathways. May promote the expression of HAMP, potentially via its interaction with BMP6. In Bos taurus (Bovine), this protein is Activin receptor type-1 (ACVR1).